Consider the following 759-residue polypeptide: MDEADFSEDTTYKQEDLPYDGDLSPIKICNDYSFTSKNDAFEVSSQIIFIADDPQEKAMHNETCGNTAMTMPLGKTTENAANKKDEKEKQCTAALHIPANEGDASKSSISDILLHHLSKEPFLRGQGIDCETLPEISNADSFEEEAIIKSIISCCNKNSWPKEQTLELTDQLNPKKDGENSNKPGSPTMTEENTSDLEETVAAGDSSHQENVNILTKTKGPGDKQNSYQGQAPPKQHTEKASSGNRFKYGQGQVHYQLPDFSKIAPEVKNPKNNIINKPLAIAKQVSFSKLREKPAVVQDILETMPESNCVEKQHQEQKGEITEPSQQIQMEPTVHIHQELLTGIESEASISKLSPTSQKGTSSSSSYIFQKISQGKQMCQKLKEQTDQLKTKVREFSKRIKQESPYHLQDKKLVLEKLQGHLELLEQNFLATKDKHLTLQQQVHKHESTIVSDFDPERKVEGEIFKLEMLLEDVKDKVDESKYTSAPSLPVSSPVTLDDLASTSSSLSNEVPEEHPGHPPGPRGSGGSEATGTPQGGPQEAPKEELCELTPQIYLNGHYGDATVQNQPDQVAMRLSSNSGEDPRCTPGRQDCAETTAPSPSCAFCRRLLEWKPKVEKKGHRRIHCGRFSTVHEKAPHSDSTPNSDTGHSFCSDSGTEMQGNKCQDCGTKIPTSRRACRKEPPKEFHYRHNTPGENYSNHSKRGAFVRPHSLHESKNSSPSLASPFCCPGLMYSPDTSKSSPTPGWQEAELGLENMKSQ.

Positions 169-246 (TDQLNPKKDG…HTEKASSGNR (78 aa)) are disordered. The span at 181 to 192 (SNKPGSPTMTEE) shows a compositional bias: polar residues. A coiled-coil region spans residues 371-482 (QKISQGKQMC…EDVKDKVDES (112 aa)). The segment covering 484 to 496 (YTSAPSLPVSSPV) has biased composition (polar residues). 4 disordered regions span residues 484 to 543 (YTSA…QEAP), 634 to 654 (EKAP…FCSD), 678 to 723 (CRKE…PSLA), and 735 to 759 (PDTS…MKSQ). Over residues 497 to 509 (TLDDLASTSSSLS) the composition is skewed to low complexity. Positions 639 to 654 (SDSTPNSDTGHSFCSD) are enriched in polar residues. Over residues 679–688 (RKEPPKEFHY) the composition is skewed to basic and acidic residues. Residues 735–744 (PDTSKSSPTP) show a composition bias toward polar residues.

This sequence belongs to the AKNA family.

This Macaca fascicularis (Crab-eating macaque) protein is Protein AKNAD1 (AKNAD1).